The sequence spans 388 residues: 2-Hydroxyacid oxidase (388 aa).

A disordered region spans residues 1–21; sequence MENQFKNNNNSSSIETSNQFS. The FMN hydroxy acid dehydrogenase domain maps to 26-384; sequence NRLDSFVSVS…NNSIIWDQNK (359 aa). Tyr52 serves as a coordination point for glyoxylate. Residues 105-107, Ser134, 156-158, and Thr184 contribute to the FMN site; these read PWA and QLY. Residue Tyr158 coordinates glyoxylate. Arg193 is a glyoxylate binding site. FMN is bound by residues Lys255 and Ser277. Positions 279 and 282 each coordinate glyoxylate. His279 functions as the Proton acceptor in the catalytic mechanism. Residues 310 to 314 and 333 to 334 each bind FMN; these read DGGIR and GR.

It belongs to the FMN-dependent alpha-hydroxy acid dehydrogenase family. Homotetramer. The cofactor is FMN.

It catalyses the reaction glycolate + O2 = glyoxylate + H2O2. The catalysed reaction is a (2S)-2-hydroxycarboxylate + O2 = a 2-oxocarboxylate + H2O2. Its function is as follows. Catalyzes the oxidation of glycolate to glyoxylate, with a reduction of O2 to H2O2. May use other 2-hydroxyacids as substrates. This chain is 2-Hydroxyacid oxidase (haox), found in Dictyostelium discoideum (Social amoeba).